A 255-amino-acid polypeptide reads, in one-letter code: ETS-related transcription factor Elf-5 (255 aa).

The PNT domain occupies 33–119 (YPAFEHQTAC…FILQSIRSQG (87 aa)). The ETS DNA-binding region spans 163 to 244 (SHLWEFVRDL…VDRRLVYKFG (82 aa)).

It belongs to the ETS family.

The protein localises to the nucleus. Its function is as follows. Transcriptionally activator that may play a role in regulating the later stages of keratinocytes terminal differentiation. Binds to DNA sequences containing the consensus nucleotide core sequence GGA[AT]. This Bos taurus (Bovine) protein is ETS-related transcription factor Elf-5 (ELF5).